Here is an 87-residue protein sequence, read N- to C-terminus: Large ribosomal subunit protein bL27 (87 aa).

The tract at residues 1–23 (MAHKKGTGSTRNGRDSNAQRLGV) is disordered. Residues 7-19 (TGSTRNGRDSNAQ) are compositionally biased toward polar residues.

The protein belongs to the bacterial ribosomal protein bL27 family.

This Synechocystis sp. (strain ATCC 27184 / PCC 6803 / Kazusa) protein is Large ribosomal subunit protein bL27 (rpmA).